The sequence spans 266 residues: Aquaporin TIP3-2 (266 aa).

2 consecutive transmembrane segments (helical) span residues 29–49 (AAISEFIATAIFVFAAEGSVL) and 66–86 (GLVAVALAHALGLAVAVAVAV). Positions 94-96 (NPA) match the NPA 1 motif. Helical transmembrane passes span 109-129 (LVRAVLYWAAQLLGAVAATLL), 153-173 (AVLLEAVMTFGFVYAYYATVV), and 180-200 (LGTIAPLAVGFLLGANVLAGG). The NPA 2 motif lies at 208-210 (NPA). Residues 228–248 (YWLGPFLGAGLAGLVYEYLLI) traverse the membrane as a helical segment.

This sequence belongs to the MIP/aquaporin (TC 1.A.8) family. TIP (TC 1.A.8.10) subfamily.

The protein resides in the vacuole membrane. Functionally, aquaporins facilitate the transport of water and small neutral solutes across cell membranes. This is Aquaporin TIP3-2 (TIP3-2) from Zea mays (Maize).